The following is a 331-amino-acid chain: L-lactate dehydrogenase A chain (331 aa).

NAD(+) contacts are provided by residues 29-57 and arginine 98; that span reads GMVG…MEDK. Residues arginine 105, asparagine 137, and arginine 168 each coordinate substrate. Asparagine 137 provides a ligand contact to NAD(+). The Proton acceptor role is filled by histidine 192. Threonine 247 lines the substrate pocket.

Belongs to the LDH/MDH superfamily. LDH family. Homotetramer.

The protein localises to the cytoplasm. It catalyses the reaction (S)-lactate + NAD(+) = pyruvate + NADH + H(+). It participates in fermentation; pyruvate fermentation to lactate; (S)-lactate from pyruvate: step 1/1. In terms of biological role, interconverts simultaneously and stereospecifically pyruvate and lactate with concomitant interconversion of NADH and NAD(+). The sequence is that of L-lactate dehydrogenase A chain (ldha) from Dissostichus mawsoni (Antarctic cod).